Here is a 296-residue protein sequence, read N- to C-terminus: Light-inducible protein CPRF3 (296 aa).

3 disordered regions span residues 1-27, 98-165, and 190-223; these read MSDG…ITTT, PNLA…GSLE, and RVND…KSDE. Residues 107 to 117 show a composition bias toward basic and acidic residues; the sequence is VGRKISDEKGR. Over residues 145-156 the composition is skewed to low complexity; the sequence is SSSDNDCPSLSS. Residues 196–259 enclose the bZIP domain; sequence ELKRQRRKQS…AEVTSENHSI (64 aa). Residues 198–220 form a basic motif region; the sequence is KRQRRKQSNRESARRSRLRKQAK. Positions 224–245 are leucine-zipper; sequence LQERLDNLSKENRILRKNLQRI.

Belongs to the bZIP family. In terms of assembly, binds DNA as a dimer.

The protein localises to the nucleus. Functionally, binds to the G-box-like motif (5'-ACGTGGC-3') of the chalcone synthase (CHS) gene promoter. G-box and G-box-like motifs are defined in promoters of certain plant genes which are regulated by such diverse stimuli as light-induction or hormone control. In Petroselinum crispum (Parsley), this protein is Light-inducible protein CPRF3 (CPRF3).